We begin with the raw amino-acid sequence, 339 residues long: 1-aminocyclopropane-1-carboxylate deaminase (339 aa).

Lys-52 is subject to N6-(pyridoxal phosphate)lysine. Catalysis depends on Ser-79, which acts as the Nucleophile.

Belongs to the ACC deaminase/D-cysteine desulfhydrase family. Homotrimer. Pyridoxal 5'-phosphate serves as cofactor.

It carries out the reaction 1-aminocyclopropane-1-carboxylate + H2O = 2-oxobutanoate + NH4(+). Functionally, catalyzes a cyclopropane ring-opening reaction, the irreversible conversion of 1-aminocyclopropane-1-carboxylate (ACC) to ammonia and alpha-ketobutyrate. Allows growth on ACC as a nitrogen source. The chain is 1-aminocyclopropane-1-carboxylate deaminase from Rhizobium leguminosarum bv. viciae.